The sequence spans 101 residues: UPF0235 protein MmarC7_0309 (101 aa).

Belongs to the UPF0235 family.

The polypeptide is UPF0235 protein MmarC7_0309 (Methanococcus maripaludis (strain C7 / ATCC BAA-1331)).